A 246-amino-acid chain; its full sequence is Exosome complex component Rrp41 (246 aa).

Belongs to the RNase PH family. Rrp41 subfamily. In terms of assembly, component of the archaeal exosome complex. Forms a hexameric ring-like arrangement composed of 3 Rrp41-Rrp42 heterodimers. The hexameric ring associates with a trimer of Rrp4 and/or Csl4 subunits.

Its subcellular location is the cytoplasm. Functionally, catalytic component of the exosome, which is a complex involved in RNA degradation. Has 3'-&gt;5' exoribonuclease activity. Can also synthesize heteromeric RNA-tails. The polypeptide is Exosome complex component Rrp41 (Pyrobaculum arsenaticum (strain DSM 13514 / JCM 11321 / PZ6)).